Consider the following 398-residue polypeptide: Phosphoglycerate kinase (398 aa).

Residues 21 to 23 (DFN), arginine 36, 59 to 62 (HLGR), arginine 119, and arginine 157 contribute to the substrate site. ATP is bound by residues lysine 208, glycine 296, glutamate 327, and 354–357 (GGDS).

It belongs to the phosphoglycerate kinase family. As to quaternary structure, monomer.

Its subcellular location is the cytoplasm. The enzyme catalyses (2R)-3-phosphoglycerate + ATP = (2R)-3-phospho-glyceroyl phosphate + ADP. The protein operates within carbohydrate degradation; glycolysis; pyruvate from D-glyceraldehyde 3-phosphate: step 2/5. The protein is Phosphoglycerate kinase (pgk) of Streptococcus pyogenes serotype M1.